Here is a 70-residue protein sequence, read N- to C-terminus: ATP synthase subunit c (70 aa).

Helical transmembrane passes span 4-24 (IAAGIAAGLAAVGAGVGNGLV) and 47-67 (FLGVGLIEALPILSIVIAFLV).

Belongs to the ATPase C chain family. In terms of assembly, F-type ATPases have 2 components, F(1) - the catalytic core - and F(0) - the membrane proton channel. F(1) has five subunits: alpha(3), beta(3), gamma(1), delta(1), epsilon(1). F(0) has three main subunits: a(1), b(2) and c(10-14). The alpha and beta chains form an alternating ring which encloses part of the gamma chain. F(1) is attached to F(0) by a central stalk formed by the gamma and epsilon chains, while a peripheral stalk is formed by the delta and b chains.

The protein localises to the cell membrane. Functionally, f(1)F(0) ATP synthase produces ATP from ADP in the presence of a proton or sodium gradient. F-type ATPases consist of two structural domains, F(1) containing the extramembraneous catalytic core and F(0) containing the membrane proton channel, linked together by a central stalk and a peripheral stalk. During catalysis, ATP synthesis in the catalytic domain of F(1) is coupled via a rotary mechanism of the central stalk subunits to proton translocation. Key component of the F(0) channel; it plays a direct role in translocation across the membrane. A homomeric c-ring of between 10-14 subunits forms the central stalk rotor element with the F(1) delta and epsilon subunits. This Limosilactobacillus fermentum (strain NBRC 3956 / LMG 18251) (Lactobacillus fermentum) protein is ATP synthase subunit c.